We begin with the raw amino-acid sequence, 584 residues long: Alpha-glucosidase MAL32 (584 aa).

The Nucleophile role is filled by aspartate 214. The Proton donor role is filled by glutamate 276.

Belongs to the glycosyl hydrolase 13 family.

The enzyme catalyses Hydrolysis of terminal, non-reducing (1-&gt;4)-linked alpha-D-glucose residues with release of alpha-D-glucose.. In Saccharomyces cerevisiae (strain ATCC 204508 / S288c) (Baker's yeast), this protein is Alpha-glucosidase MAL32 (MAL32).